The primary structure comprises 117 residues: G antigen 12J (117 aa).

The tract at residues 1 to 117 is disordered; the sequence is MSWRGRSTYY…PEEGEKQSQC (117 aa). 2 stretches are compositionally biased toward acidic residues: residues 32–45 and 87–96; these read FSDE…EEGE and ECEDGPDGQE. The span at 103-117 shows a compositional bias: basic and acidic residues; that stretch reads EEVKTPEEGEKQSQC.

Belongs to the GAGE family.

The protein is G antigen 12J (GAGE12J) of Homo sapiens (Human).